A 400-amino-acid polypeptide reads, in one-letter code: Tryptophan synthase beta chain (400 aa).

N6-(pyridoxal phosphate)lysine is present on Lys-92.

It belongs to the TrpB family. Tetramer of two alpha and two beta chains. Pyridoxal 5'-phosphate serves as cofactor.

It carries out the reaction (1S,2R)-1-C-(indol-3-yl)glycerol 3-phosphate + L-serine = D-glyceraldehyde 3-phosphate + L-tryptophan + H2O. It participates in amino-acid biosynthesis; L-tryptophan biosynthesis; L-tryptophan from chorismate: step 5/5. Its function is as follows. The beta subunit is responsible for the synthesis of L-tryptophan from indole and L-serine. The sequence is that of Tryptophan synthase beta chain from Neisseria gonorrhoeae (strain NCCP11945).